Consider the following 125-residue polypeptide: Fluoride-specific ion channel FluC (125 aa).

4 consecutive transmembrane segments (helical) span residues 4–24 (ILLV…VGLW), 32–52 (AFPW…GFLA), 68–88 (FLIT…LDAI), and 100–120 (LAYI…GLAL). Na(+) is bound by residues G75 and T78.

Belongs to the fluoride channel Fluc/FEX (TC 1.A.43) family.

It localises to the cell inner membrane. The catalysed reaction is fluoride(in) = fluoride(out). Its activity is regulated as follows. Na(+) is not transported, but it plays an essential structural role and its presence is essential for fluoride channel function. Functionally, fluoride-specific ion channel. Important for reducing fluoride concentration in the cell, thus reducing its toxicity. This Rhizobium meliloti (strain 1021) (Ensifer meliloti) protein is Fluoride-specific ion channel FluC.